A 484-amino-acid polypeptide reads, in one-letter code: tRNA-2-methylthio-N(6)-dimethylallyladenosine synthase (484 aa).

The MTTase N-terminal domain occupies 36 to 153 (GKLYIKTHGC…LPELIRARRE (118 aa)). Residues cysteine 45, cysteine 82, cysteine 116, cysteine 190, cysteine 194, and cysteine 197 each contribute to the [4Fe-4S] cluster site. The 240-residue stretch at 176–415 (RAEGPSAFVS…HINAHAASIS (240 aa)) folds into the Radical SAM core domain. The TRAM domain occupies 416 to 479 (QSMVGSVQRV…SNSLRGRIQL (64 aa)). Residues 428 to 450 (EGPSRRDPNELTGKSENMRPVNF) are disordered.

This sequence belongs to the methylthiotransferase family. MiaB subfamily. As to quaternary structure, monomer. The cofactor is [4Fe-4S] cluster.

The protein localises to the cytoplasm. The enzyme catalyses N(6)-dimethylallyladenosine(37) in tRNA + (sulfur carrier)-SH + AH2 + 2 S-adenosyl-L-methionine = 2-methylsulfanyl-N(6)-dimethylallyladenosine(37) in tRNA + (sulfur carrier)-H + 5'-deoxyadenosine + L-methionine + A + S-adenosyl-L-homocysteine + 2 H(+). Catalyzes the methylthiolation of N6-(dimethylallyl)adenosine (i(6)A), leading to the formation of 2-methylthio-N6-(dimethylallyl)adenosine (ms(2)i(6)A) at position 37 in tRNAs that read codons beginning with uridine. In Xanthomonas euvesicatoria pv. vesicatoria (strain 85-10) (Xanthomonas campestris pv. vesicatoria), this protein is tRNA-2-methylthio-N(6)-dimethylallyladenosine synthase.